A 711-amino-acid chain; its full sequence is MLNPIVRKFQYGQHTVTLETGIMARQATAAVMVSMDDTAVFVTVVGQKKAKPGQDFFPLTVNYQERTYAAGRIPGSFFRREGRPSEGETLIARLIDRPIRPLFPEGFVNEVQVIATVVSVNPQVNPDIVAMIGASAALSLSGIPFNGPIGAARVGYINDQYVLNPTQDELKESKLDLVVAGTEAAVLMVESEAELLSEDQMLGAVVFGHEQQQVVIQNINELVKEAGKPRWDWQPEPVNEALNARVAALAEARLSDAYRITDKQERYAQVDVIKSETIATLLAEDETLDENELGEILHAIEKNVVRSRVLAGEPRIDGREKDMIRGLDVRTGVLPRTHGSALFTRGETQALVTATLGTARDAQVLDELMGERTDTFLFHYNFPPYSVGETGMVGSPKRREIGHGRLAKRGVLAVMPDMDKFPYTVRVVSEITESNGSSSMASVCGASLALMDAGVPIKAAVAGIAMGLVKEGDNYVVLSDILGDEDHLGDMDFKVAGSRDGISALQMDIKIEGITKEIMQVALNQAKGARLHILGVMEQAINAPRGDISEFAPRIHTIKINPDKIKDVIGKGGSVIRALTEETGTTIEIEDDGTVKIAATDGEKAKHAIRRIEEITAEIEVGRVYTGKVTRIVDFGAFVAIGGGKEGLVHISQIADKRVEKVTDYLQMGQEVPVKVLEVDRQGRIRLSIKEATEQSQPAAAPEAPAAEQGE.

Residues Asp486 and Asp492 each coordinate Mg(2+). In terms of domain architecture, KH spans 553-612; it reads PRIHTIKINPDKIKDVIGKGGSVIRALTEETGTTIEIEDDGTVKIAATDGEKAKHAIRRI. The region spanning 622–690 is the S1 motif domain; the sequence is GRVYTGKVTR…RQGRIRLSIK (69 aa). Residues 689–711 are disordered; the sequence is IKEATEQSQPAAAPEAPAAEQGE. Low complexity predominate over residues 694–711; it reads EQSQPAAAPEAPAAEQGE.

Belongs to the polyribonucleotide nucleotidyltransferase family. Component of the RNA degradosome, which is a multiprotein complex involved in RNA processing and mRNA degradation. The cofactor is Mg(2+).

The protein localises to the cytoplasm. The catalysed reaction is RNA(n+1) + phosphate = RNA(n) + a ribonucleoside 5'-diphosphate. Involved in mRNA degradation. Catalyzes the phosphorolysis of single-stranded polyribonucleotides processively in the 3'- to 5'-direction. This is Polyribonucleotide nucleotidyltransferase from Escherichia coli (strain ATCC 8739 / DSM 1576 / NBRC 3972 / NCIMB 8545 / WDCM 00012 / Crooks).